The sequence spans 277 residues: Large ribosomal subunit protein uL2 (277 aa).

Residues 222 to 277 form a disordered region; that stretch reads GVAMNPIDHPHGGGEGRTSGGRHPVTPWGKPTKGKKTRTNKSTDKFILLSRHKRKK.

Belongs to the universal ribosomal protein uL2 family. As to quaternary structure, part of the 50S ribosomal subunit. Forms a bridge to the 30S subunit in the 70S ribosome.

Functionally, one of the primary rRNA binding proteins. Required for association of the 30S and 50S subunits to form the 70S ribosome, for tRNA binding and peptide bond formation. It has been suggested to have peptidyltransferase activity; this is somewhat controversial. Makes several contacts with the 16S rRNA in the 70S ribosome. The polypeptide is Large ribosomal subunit protein uL2 (Bradyrhizobium sp. (strain ORS 278)).